The primary structure comprises 244 residues: Monothiol glutaredoxin-4 (244 aa).

Residues 3–110 (VVEIKSQDQF…FVKSLEILSN (108 aa)) form the Thioredoxin domain. Positions 116–143 (ANNAKGPKSTSDEESSGSSDDEEDETEE) are disordered. The span at 127–143 (DEESSGSSDDEEDETEE) shows a compositional bias: acidic residues. The 99-residue stretch at 146 to 244 (NARLVKLVQA…DPEYFQHALQ (99 aa)) folds into the Glutaredoxin domain. Lys-163 contributes to the glutathione binding site. Cys-171 provides a ligand contact to [2Fe-2S] cluster. Glutathione is bound by residues Arg-200, Phe-212, and 225-226 (LD).

The protein belongs to the glutaredoxin family. Monothiol subfamily. As to quaternary structure, homodimer. Heterodimer with FRA2.

Monothiol glutaredoxin involved in the biogenesis of iron-sulfur clusters. Binds one iron-sulfur cluster per dimer. The iron-sulfur cluster is bound between subunits, and is complexed by a bound glutathione and a cysteine residue from each subunit. The polypeptide is Monothiol glutaredoxin-4 (GRX4) (Saccharomyces cerevisiae (strain ATCC 204508 / S288c) (Baker's yeast)).